The primary structure comprises 150 residues: 3-hydroxyacyl-[acyl-carrier-protein] dehydratase FabZ (150 aa).

The active site involves His-54.

This sequence belongs to the thioester dehydratase family. FabZ subfamily.

It localises to the cytoplasm. The enzyme catalyses a (3R)-hydroxyacyl-[ACP] = a (2E)-enoyl-[ACP] + H2O. Its function is as follows. Involved in unsaturated fatty acids biosynthesis. Catalyzes the dehydration of short chain beta-hydroxyacyl-ACPs and long chain saturated and unsaturated beta-hydroxyacyl-ACPs. This is 3-hydroxyacyl-[acyl-carrier-protein] dehydratase FabZ from Vibrio parahaemolyticus serotype O3:K6 (strain RIMD 2210633).